A 1035-amino-acid chain; its full sequence is Ephrin type-A receptor 6 (1035 aa).

The N-terminal stretch at 1–22 (MGGCEVREFLLQFGFFLPLLTA) is a signal peptide. Topologically, residues 23 to 549 (WTGDCSHVSN…MAAEQGQILV (527 aa)) are extracellular. Positions 33 to 211 (QVVLLDTSTV…FYKKCPFTVR (179 aa)) constitute an Eph LBD domain. 2 Fibronectin type-III domains span residues 330–440 (PPSA…TDQD) and 441–536 (APSL…TGDE). Asn342, Asn396, and Asn409 each carry an N-linked (GlcNAc...) asparagine glycan. Residues 550–570 (IATAAVGGFTLLVILTLFFLI) form a helical membrane-spanning segment. The Cytoplasmic segment spans residues 571–1035 (TGRCQWYIKA…MHIQEKGFHV (465 aa)). 2 positions are modified to phosphotyrosine; by autocatalysis: Tyr605 and Tyr611. In terms of domain architecture, Protein kinase spans 630–943 (IRIERVIGAG…RNPSALHTLV (314 aa)). ATP is bound by residues 636–644 (IGAGEFGEV) and Lys662. Asp797 serves as the catalytic Proton acceptor. 2 positions are modified to phosphotyrosine; by autocatalysis: Tyr830 and Tyr977. Residues 960–1024 (PLFVTVGDWL…VSSIQTLRLH (65 aa)) enclose the SAM domain. Positions 1033–1035 (FHV) match the PDZ-binding motif.

The protein belongs to the protein kinase superfamily. Tyr protein kinase family. Ephrin receptor subfamily. Heterotetramer upon binding of the ligand. The heterotetramer is composed of an ephrin dimer and a receptor dimer. Oligomerization is probably required to induce biological responses. Interacts (via SAM domain) with ANKS1A (via SAM domain). As to expression, brain.

Its subcellular location is the membrane. The enzyme catalyses L-tyrosyl-[protein] + ATP = O-phospho-L-tyrosyl-[protein] + ADP + H(+). Receptor tyrosine kinase which binds promiscuously GPI-anchored ephrin-A family ligands residing on adjacent cells, leading to contact-dependent bidirectional signaling into neighboring cells. The signaling pathway downstream of the receptor is referred to as forward signaling while the signaling pathway downstream of the ephrin ligand is referred to as reverse signaling. The polypeptide is Ephrin type-A receptor 6 (Epha6) (Rattus norvegicus (Rat)).